Reading from the N-terminus, the 1216-residue chain is FK506-binding protein 15 (1216 aa).

At Met1 the chain carries N-acetylmethionine. Phosphoserine is present on residues Ser14 and Ser23. The disordered stretch occupies residues 41–68 (YTAPKQPKKGQGTAAGNQTAPKPAPATT). The span at 59 to 68 (TAPKPAPATT) shows a compositional bias: low complexity. Residues 71-168 (SSVLFATAVH…AVSFNKQVCV (98 aa)) form an important for function in growth cone organization region. An N6-acetyllysine modification is found at Lys91. Residues 196–289 (GDSLEVAYTG…VFEVEVRRVK (94 aa)) form the PPIase FKBP-type domain. Residues 292 to 357 (RDSGSDGHSV…QLTVNSNPDT (66 aa)) are disordered. Low complexity predominate over residues 303-322 (SRDSAAPSPIPASDSLSADP). Residues Ser306, Ser310, Ser342, Ser344, and Ser617 each carry the phosphoserine modification. Polar residues predominate over residues 340–356 (SKSNSLSEQLTVNSNPD). Coiled coils occupy residues 519–790 (MAVN…AAAE) and 820–865 (QQYR…RLEK). A disordered region spans residues 927–1216 (HQEEEEEEEE…DDDDDIGWLG (290 aa)). The segment covering 929-940 (EEEEEEEEEEEE) has biased composition (acidic residues). Residue Ser948 is modified to Phosphoserine. The segment covering 954 to 964 (PATPGMPPAPP) has biased composition (pro residues). A compositionally biased stretch (low complexity) spans 983–994 (TTPLPLQALPTP). Residue Ser1018 is modified to Phosphoserine. The segment covering 1036–1045 (TSIPPKPPGP) has biased composition (pro residues). 2 positions are modified to phosphoserine: Ser1050 and Ser1091. Thr1093 is modified (phosphothreonine). 5 positions are modified to phosphoserine: Ser1108, Ser1153, Ser1157, Ser1159, and Ser1190. Thr1198 carries the post-translational modification Phosphothreonine. Over residues 1202 to 1216 (GDDDDDDDDDIGWLG) the composition is skewed to acidic residues.

It belongs to the FKBP-type PPIase family. As to quaternary structure, interacts with WIP and actin. Interacts with TBC1D23. In terms of tissue distribution, expressed in brain, with highest levels in the granular cell layer of cerebellum and in the granule cell layer of dentate gyrus.

It is found in the cytoplasm. The protein resides in the cell projection. It localises to the axon. The protein localises to the early endosome. Its function is as follows. Involved in the transport of early endosomes at the level of transition between microfilament-based and microtubule-based movement. May be involved in the cytoskeletal organization of neuronal growth cones. Seems to be inactive as a PPIase. This Mus musculus (Mouse) protein is FK506-binding protein 15 (Fkbp15).